The chain runs to 289 residues: Rhomboid-type serine protease 2 (289 aa).

Helical transmembrane passes span valine 26–glutamine 46, phenylalanine 67–leucine 87, cysteine 100–glutamate 120, phenylalanine 122–glycine 142, isoleucine 157–valine 179, and phenylalanine 184–leucine 203. Catalysis depends on serine 134, which acts as the Nucleophile. Residue histidine 187 is part of the active site.

It belongs to the peptidase S54 family.

It localises to the golgi apparatus membrane. The protein localises to the golgi apparatus. It is found in the cis-Golgi network membrane. The catalysed reaction is Cleaves type-1 transmembrane domains using a catalytic dyad composed of serine and histidine that are contributed by different transmembrane domains.. Functionally, probable rhomboid-type serine protease that catalyzes intramembrane proteolysis. This is Rhomboid-type serine protease 2 (RBD2) from Podospora anserina (Pleurage anserina).